The following is a 338-amino-acid chain: Anthranilate phosphoribosyltransferase (338 aa).

5-phospho-alpha-D-ribose 1-diphosphate is bound by residues G81, G84–D85, T89, N91–T94, K109–S117, and A121. Residue G81 participates in anthranilate binding. Mg(2+) is bound at residue S93. Residue N112 coordinates anthranilate. R167 is an anthranilate binding site. Mg(2+) contacts are provided by D225 and E226.

It belongs to the anthranilate phosphoribosyltransferase family. In terms of assembly, homodimer. Mg(2+) is required as a cofactor.

It catalyses the reaction N-(5-phospho-beta-D-ribosyl)anthranilate + diphosphate = 5-phospho-alpha-D-ribose 1-diphosphate + anthranilate. Its pathway is amino-acid biosynthesis; L-tryptophan biosynthesis; L-tryptophan from chorismate: step 2/5. Catalyzes the transfer of the phosphoribosyl group of 5-phosphorylribose-1-pyrophosphate (PRPP) to anthranilate to yield N-(5'-phosphoribosyl)-anthranilate (PRA). The sequence is that of Anthranilate phosphoribosyltransferase from Rhizobium etli (strain CIAT 652).